The sequence spans 275 residues: 3-deoxy-manno-octulosonate cytidylyltransferase (275 aa).

The protein belongs to the KdsB family.

It is found in the cytoplasm. The enzyme catalyses 3-deoxy-alpha-D-manno-oct-2-ulosonate + CTP = CMP-3-deoxy-beta-D-manno-octulosonate + diphosphate. Its pathway is nucleotide-sugar biosynthesis; CMP-3-deoxy-D-manno-octulosonate biosynthesis; CMP-3-deoxy-D-manno-octulosonate from 3-deoxy-D-manno-octulosonate and CTP: step 1/1. It participates in bacterial outer membrane biogenesis; lipopolysaccharide biosynthesis. In terms of biological role, activates KDO (a required 8-carbon sugar) for incorporation into bacterial lipopolysaccharide in Gram-negative bacteria. This Psychrobacter sp. (strain PRwf-1) protein is 3-deoxy-manno-octulosonate cytidylyltransferase.